Consider the following 142-residue polypeptide: Transcriptional regulator MraZ (142 aa).

SpoVT-AbrB domains are found at residues Glu-5–Glu-47 and Ala-76–Glu-119.

Belongs to the MraZ family. In terms of assembly, forms oligomers.

The protein resides in the cytoplasm. Its subcellular location is the nucleoid. In Desulforamulus reducens (strain ATCC BAA-1160 / DSM 100696 / MI-1) (Desulfotomaculum reducens), this protein is Transcriptional regulator MraZ.